We begin with the raw amino-acid sequence, 180 residues long: Putative manganese efflux pump MntP (180 aa).

A run of 6 helical transmembrane segments spans residues 4–24 (FVTI…VALG), 40–60 (LTIG…GKWL), 64–84 (FDVI…VQMA), 103–123 (LLLF…SFGI), 129–149 (FVTV…GLIV), and 156–176 (FLGA…GLKI).

It belongs to the MntP (TC 9.B.29) family.

The protein localises to the cell membrane. Functionally, probably functions as a manganese efflux pump. In Shouchella clausii (strain KSM-K16) (Alkalihalobacillus clausii), this protein is Putative manganese efflux pump MntP.